Reading from the N-terminus, the 79-residue chain is Dicentracin (79 aa).

Residues 1–22 (MKCATLFLVLSMVVLMAEPGDA) form the signal peptide. At Gly44 the chain carries Glycine amide. Positions 47-79 (AQQDQQDQQYQQDQQDQQAEQYQRFNRERAAFD) are excised as a propeptide. Positions 48–67 (QQDQQDQQYQQDQQDQQAEQ) are disordered.

Belongs to the pleurocidin family.

The protein localises to the secreted. In Dicentrarchus labrax (European seabass), this protein is Dicentracin.